A 120-amino-acid polypeptide reads, in one-letter code: Large ribosomal subunit protein uL18 (120 aa).

It belongs to the universal ribosomal protein uL18 family. Part of the 50S ribosomal subunit; part of the 5S rRNA/L5/L18/L25 subcomplex. Contacts the 5S and 23S rRNAs.

Functionally, this is one of the proteins that bind and probably mediate the attachment of the 5S RNA into the large ribosomal subunit, where it forms part of the central protuberance. This chain is Large ribosomal subunit protein uL18, found in Nitrobacter winogradskyi (strain ATCC 25391 / DSM 10237 / CIP 104748 / NCIMB 11846 / Nb-255).